The sequence spans 446 residues: Probable D-serine dehydratase (446 aa).

Lysine 116 bears the N6-(pyridoxal phosphate)lysine mark.

Belongs to the serine/threonine dehydratase family. DsdA subfamily. It depends on pyridoxal 5'-phosphate as a cofactor.

The enzyme catalyses D-serine = pyruvate + NH4(+). This is Probable D-serine dehydratase from Bacillus cereus (strain 03BB102).